The sequence spans 202 residues: ATP-dependent Clp protease proteolytic subunit (202 aa).

Residue Ser-106 is the Nucleophile of the active site. His-131 is an active-site residue.

Belongs to the peptidase S14 family. Fourteen ClpP subunits assemble into 2 heptameric rings which stack back to back to give a disk-like structure with a central cavity, resembling the structure of eukaryotic proteasomes.

Its subcellular location is the cytoplasm. It carries out the reaction Hydrolysis of proteins to small peptides in the presence of ATP and magnesium. alpha-casein is the usual test substrate. In the absence of ATP, only oligopeptides shorter than five residues are hydrolyzed (such as succinyl-Leu-Tyr-|-NHMec, and Leu-Tyr-Leu-|-Tyr-Trp, in which cleavage of the -Tyr-|-Leu- and -Tyr-|-Trp bonds also occurs).. Functionally, cleaves peptides in various proteins in a process that requires ATP hydrolysis. Has a chymotrypsin-like activity. Plays a major role in the degradation of misfolded proteins. This Shewanella sp. (strain W3-18-1) protein is ATP-dependent Clp protease proteolytic subunit.